The primary structure comprises 932 residues: Beta-mannosidase A (932 aa).

The N-terminal stretch at 1–21 (MRIREQTILALLSPGLPPVTG) is a signal peptide. 5 N-linked (GlcNAc...) asparagine glycosylation sites follow: N40, N248, N283, N317, and N348. E480 serves as the catalytic Proton donor. Residues N538, N609, N632, N659, N739, N762, and N791 are each glycosylated (N-linked (GlcNAc...) asparagine).

This sequence belongs to the glycosyl hydrolase 2 family. Beta-mannosidase A subfamily. As to quaternary structure, homodimer.

Its subcellular location is the secreted. It carries out the reaction Hydrolysis of terminal, non-reducing beta-D-mannose residues in beta-D-mannosides.. Its pathway is glycan metabolism; N-glycan degradation. In terms of biological role, exoglycosidase that cleaves the single beta-linked mannose residue from the non-reducing end of beta-mannosidic oligosaccharides of various complexity and length. Involved in the degradation of polymeric mannan and galactomannan. The protein is Beta-mannosidase A (mndA) of Aspergillus clavatus (strain ATCC 1007 / CBS 513.65 / DSM 816 / NCTC 3887 / NRRL 1 / QM 1276 / 107).